An 894-amino-acid polypeptide reads, in one-letter code: CWF19-like protein 2 (894 aa).

The disordered stretch occupies residues 1–147 (MATSMAAASG…DEKSGKDDTQ (147 aa)). A compositionally biased stretch (basic and acidic residues) spans 13-56 (ESAKSIEERKEQTRNARAEVLRQAKANFEKEERRKELKRLRGED). Residues 13 to 107 (ESAKSIEERK…KKQKYEKNNE (95 aa)) are a coiled coil. Residue S75 is modified to Phosphoserine. Residues 76-99 (VKKKKKKDKHSKKAKKEKKKKSKK) are compositionally biased toward basic residues. Basic and acidic residues predominate over residues 128–147 (PDKEKAWKVKDEKSGKDDTQ). A coiled-coil region spans residues 166-281 (SSSSLKAEKE…AEKAASTKED (116 aa)). Residue K171 forms a Glycyl lysine isopeptide (Lys-Gly) (interchain with G-Cter in SUMO2) linkage. Residues 270–284 (EDAEKAASTKEDYRR) show a composition bias toward basic and acidic residues. Residues 270–483 (EDAEKAASTK…STFAGSPERE (214 aa)) form a disordered region. The segment covering 320 to 330 (TTDTAKNSNNE) has biased composition (polar residues). Positions 332-352 (FIGDEKDKRPGSLETCRRESN) are enriched in basic and acidic residues. Phosphoserine occurs at positions 360 and 372. Basic and acidic residues-rich tracts occupy residues 410-430 (KNSEERLTSWSRSDGRGDKKH) and 440-473 (TDEHQHVPEDPREKSQDEVLRDDPPKKEHLRDTK). Phosphoserine occurs at positions 479 and 484. A coiled-coil region spans residues 502-530 (KAEMMGNMELAEQLKVQLEKANKFKETIT). The disordered stretch occupies residues 561-583 (NTPGKSLESQGGRRKRQMVSTHE). Residue K604 forms a Glycyl lysine isopeptide (Lys-Gly) (interchain with G-Cter in SUMO2) linkage. Residues 644–675 (AAERERLGEEEENQRKKAIAEHRSLAAQMEKC) adopt a coiled-coil conformation.

This sequence belongs to the CWF19 family.

The polypeptide is CWF19-like protein 2 (CWF19L2) (Homo sapiens (Human)).